A 125-amino-acid polypeptide reads, in one-letter code: U-scoloptoxin(05)-Er1a (125 aa).

A signal peptide spans 1-20 (MLSLGVSIFLLVFLIPENSG).

It belongs to the scoloptoxin-05 family. Contains 4 disulfide bonds. In terms of tissue distribution, expressed by the venom gland.

It localises to the secreted. In Ethmostigmus rubripes (Giant centipede), this protein is U-scoloptoxin(05)-Er1a.